The sequence spans 79 residues: Putative defensin-like protein 203 (79 aa).

Positions 1 to 27 (MAKLIVNFSALLMIILLVSNGLPKAVA) are cleaved as a signal peptide. Intrachain disulfides connect Cys-30–Cys-79, Cys-40–Cys-64, Cys-49–Cys-73, and Cys-53–Cys-75.

It belongs to the DEFL family.

The protein resides in the secreted. The polypeptide is Putative defensin-like protein 203 (Arabidopsis thaliana (Mouse-ear cress)).